Consider the following 399-residue polypeptide: Na(+)/H(+) antiporter NhaA (399 aa).

A run of 11 helical transmembrane segments spans residues 14–34, 59–79, 95–115, 124–144, 154–174, 177–197, 213–233, 261–281, 290–310, 331–351, and 363–383; these read AGGI…NSPL, LIHW…GLEV, SLPT…YLLF, AGWA…MALL, VFLL…IAMF, TDLS…LVGL, LILW…GVII, FIIL…PMSF, VGIA…FSYI, VALM…LAFV, and LGIL…LAKV.

The protein belongs to the NhaA Na(+)/H(+) (TC 2.A.33) antiporter family.

It localises to the cell inner membrane. The enzyme catalyses Na(+)(in) + 2 H(+)(out) = Na(+)(out) + 2 H(+)(in). Its function is as follows. Na(+)/H(+) antiporter that extrudes sodium in exchange for external protons. In Shewanella sediminis (strain HAW-EB3), this protein is Na(+)/H(+) antiporter NhaA.